A 199-amino-acid polypeptide reads, in one-letter code: Large ribosomal subunit protein bL9 (199 aa).

A disordered region spans residues 153 to 199 (KPVKASEKKGRRPRRDEEASDEQILAEENSVTEEAVSEEIQNSESEN).

Belongs to the bacterial ribosomal protein bL9 family.

Its function is as follows. Binds to the 23S rRNA. This Treponema denticola (strain ATCC 35405 / DSM 14222 / CIP 103919 / JCM 8153 / KCTC 15104) protein is Large ribosomal subunit protein bL9.